The primary structure comprises 181 residues: Sporozoite-associated mosquito saliva protein 1 (181 aa).

A signal peptide spans 1-24; sequence MNSSWRVVVFLGLVILCHSRRARA.

In terms of tissue distribution, salivary gland (at protein level). (Microbial infection) Detected with Plasmodium berghei sporozoites isolated from the saliva of infected Anopheles gambiae mosquitoes (at protein level).

The protein resides in the secreted. In terms of biological role, decreases host neutrophil chemotaxis induced by N-formylmethionine-leucyl-phenylalanine (fMLP). Functionally, (Microbial infection) Interacts with the surface of Plasmodium berghei sporozoites. Enhances sporozoite gliding activity. Enhances host hepatocyte traversal by sporozoites. The chain is Sporozoite-associated mosquito saliva protein 1 from Anopheles gambiae (African malaria mosquito).